The sequence spans 293 residues: MTDSTRSLRNCLAPAKLNLFLHITGRRPNGYHDLQSVFQLLNWGDTLHFTLRDDGRVARVTDVPGVPEESDLVVRAANLLKAHTGTAAGVDIEIDKCLPMGAGLGGGSSDAATTLLALNRLWQLDLSRTELQSLAVKLGADVPFFVFGKNAFAEGIGEELAEVELPTRWFLVVTPRVHVPTAEIFSDELLTRNTKPVTIADFLAQQNSDAGWPDSFGRNDMQQVVTSKYAEVAQVVKWLYNVTPARMTGSGASVFAAFQSKHEAEAAKAQLPTGWNGAVAESLNEHPLFAFAS.

Residue K16 is part of the active site. An ATP-binding site is contributed by P99–S109. D141 is a catalytic residue.

Belongs to the GHMP kinase family. IspE subfamily.

The enzyme catalyses 4-CDP-2-C-methyl-D-erythritol + ATP = 4-CDP-2-C-methyl-D-erythritol 2-phosphate + ADP + H(+). It participates in isoprenoid biosynthesis; isopentenyl diphosphate biosynthesis via DXP pathway; isopentenyl diphosphate from 1-deoxy-D-xylulose 5-phosphate: step 3/6. Catalyzes the phosphorylation of the position 2 hydroxy group of 4-diphosphocytidyl-2C-methyl-D-erythritol. The sequence is that of 4-diphosphocytidyl-2-C-methyl-D-erythritol kinase from Burkholderia ambifaria (strain MC40-6).